The following is a 148-amino-acid chain: MGLITTEPRSSPHPLSPRLVHELGDPHSTLRATTDGSGAALLIHAGGEIDGRNEHLWRQLVTEAAAGVTAPGPLIVDVTGLDFMGCCAFAALADEAQRCRCRGIDLRLVSHQPIVARIAEAGGLSRVLPIYPTVDTALGKGTAGPARC.

The STAS domain occupies 30–141 (LRATTDGSGA…PTVDTALGKG (112 aa)).

The protein belongs to the anti-sigma-factor antagonist family. As to quaternary structure, interacts with unphosphorylated OprA.

This Mycobacterium tuberculosis (strain ATCC 25618 / H37Rv) protein is Putative anti-anti-sigma factor Rv2638.